A 305-amino-acid polypeptide reads, in one-letter code: Putative cuticle collagen 90 (305 aa).

2 disordered regions span residues 95–117 (AGPP…GDLG) and 146–305 (PPGQ…AKRH). Triple-helical region stretches follow at residues 96–125 (GPPG…SGIS), 142–204 (GPAG…PGTA), 208–252 (GAVG…NGRD), and 256–270 (GQPG…VGKD). A compositionally biased stretch (low complexity) spans 150 to 162 (QGPVGPQGFPGVV). Positions 278-288 (ARRDSKTESVH) are enriched in basic and acidic residues.

This sequence belongs to the cuticular collagen family. Collagen polypeptide chains are complexed within the cuticle by disulfide bonds and other types of covalent cross-links.

In terms of biological role, nematode cuticles are composed largely of collagen-like proteins. The cuticle functions both as an exoskeleton and as a barrier to protect the worm from its environment. The sequence is that of Putative cuticle collagen 90 (col-90) from Caenorhabditis elegans.